The sequence spans 381 residues: Pentraxin-related protein PTX3 (381 aa).

The first 17 residues, 1–17 (MHLLAILFCALWSAVLA), serve as a signal peptide directing secretion. Coiled coils occupy residues 74–101 (LQAT…SLAR) and 143–167 (EEAG…HAVQ). 2 cysteine pairs are disulfide-bonded: Cys-179–Cys-357 and Cys-210–Cys-271. Residues 179–381 (CETAILFPMR…QPHGGAQYVS (203 aa)) form the Pentraxin (PTX) domain. N-linked (GlcNAc...) asparagine glycosylation is present at Asn-220.

In terms of assembly, homooctamer; disulfide-linked. Binds to C1q. As to quaternary structure, (Microbial infection) Interacts with SARS coronavirus-2/SARS-CoV-2 Nucleoprotein and Spike protein homotrimer. Glycosylated.

The protein localises to the secreted. Functionally, plays a role in the regulation of innate resistance to pathogens, inflammatory reactions, possibly clearance of self-components and female fertility. The chain is Pentraxin-related protein PTX3 from Homo sapiens (Human).